Here is a 112-residue protein sequence, read N- to C-terminus: Cytochrome c 2.1 (112 aa).

Heme c contacts are provided by Cys20, Cys23, His24, and Met85.

The protein belongs to the cytochrome c family. Binds 1 heme c group covalently per subunit.

The protein localises to the mitochondrion intermembrane space. Electron carrier protein. The oxidized form of the cytochrome c heme group can accept an electron from the heme group of the cytochrome c1 subunit of cytochrome reductase. Cytochrome c then transfers this electron to the cytochrome oxidase complex, the final protein carrier in the mitochondrial electron-transport chain. The polypeptide is Cytochrome c 2.1 (Caenorhabditis briggsae).